The following is a 445-amino-acid chain: N-succinylarginine dihydrolase (445 aa).

Residues 19-28, N110, and 137-138 contribute to the substrate site; these read AGLSFGNVAS and HR. Residue E174 is part of the active site. Residue R214 participates in substrate binding. Residue H250 is part of the active site. The substrate site is built by D252 and N363. C369 serves as the catalytic Nucleophile.

The protein belongs to the succinylarginine dihydrolase family. Homodimer.

It catalyses the reaction N(2)-succinyl-L-arginine + 2 H2O + 2 H(+) = N(2)-succinyl-L-ornithine + 2 NH4(+) + CO2. The protein operates within amino-acid degradation; L-arginine degradation via AST pathway; L-glutamate and succinate from L-arginine: step 2/5. Functionally, catalyzes the hydrolysis of N(2)-succinylarginine into N(2)-succinylornithine, ammonia and CO(2). The sequence is that of N-succinylarginine dihydrolase from Shewanella sediminis (strain HAW-EB3).